The chain runs to 405 residues: Lariat debranching enzyme (405 aa).

A divalent metal cation contacts are provided by C11, H13, D40, and N85. The interval 125-159 (SGIWKEWDFNKQRPDWNDLENNNWKANIRNLYHVR) is lariat recognition loop. Positions 179, 231, and 233 each coordinate a divalent metal cation. Positions 242–277 (HNKRSHEPPNKSTSKTKKNNNEIDLDLSSDEDERSG) are disordered. Residues 264–274 (IDLDLSSDEDE) show a composition bias toward acidic residues. The residue at position 269 (S269) is a Phosphoserine.

Belongs to the lariat debranching enzyme family. Requires Fe(2+) as cofactor. Zn(2+) serves as cofactor. Mn(2+) is required as a cofactor.

The protein resides in the nucleus. Its subcellular location is the cytoplasm. With respect to regulation, active in presence of diverse metals including Fe(2+), Zn(2+) and Mn(2+). Binds two metal cations in two adjacent alpha and beta metal-binding pockets. The activity is the highest with Fe(2+) bound to the 2 metal-binding sites. Activity is low with Zn(2+) and Mn(2+). Cleaves the 2'-5' phosphodiester linkage at the branch point of lariat intron pre-mRNAs after splicing and converts them into linear molecules that are subsequently degraded, thereby facilitating ribonucleotide turnover. It also participates in Ty1 retrovirus-like transposition via an RNA lariat intermediate in cDNA synthesis. The chain is Lariat debranching enzyme (DBR1) from Saccharomyces cerevisiae (strain ATCC 204508 / S288c) (Baker's yeast).